A 299-amino-acid polypeptide reads, in one-letter code: tRNA uridine(34) hydroxylase (299 aa).

The 95-residue stretch at 132–226 (ASRPVVMLDT…YFEEVGGAHY (95 aa)) folds into the Rhodanese domain. Cys-186 (cysteine persulfide intermediate) is an active-site residue.

This sequence belongs to the TrhO family.

The catalysed reaction is uridine(34) in tRNA + AH2 + O2 = 5-hydroxyuridine(34) in tRNA + A + H2O. Functionally, catalyzes oxygen-dependent 5-hydroxyuridine (ho5U) modification at position 34 in tRNAs. This Burkholderia pseudomallei (strain K96243) protein is tRNA uridine(34) hydroxylase.